The following is a 611-amino-acid chain: Threonine--tRNA ligase (611 aa).

The catalytic stretch occupies residues 211 to 509 (DHRKLGTELE…LTEHYAGEFP (299 aa)). Cys-310, His-361, and His-486 together coordinate Zn(2+).

Belongs to the class-II aminoacyl-tRNA synthetase family. In terms of assembly, homodimer. The cofactor is Zn(2+).

The protein localises to the cytoplasm. The catalysed reaction is tRNA(Thr) + L-threonine + ATP = L-threonyl-tRNA(Thr) + AMP + diphosphate + H(+). Catalyzes the attachment of threonine to tRNA(Thr) in a two-step reaction: L-threonine is first activated by ATP to form Thr-AMP and then transferred to the acceptor end of tRNA(Thr). Also edits incorrectly charged L-seryl-tRNA(Thr). This is Threonine--tRNA ligase from Nautilia profundicola (strain ATCC BAA-1463 / DSM 18972 / AmH).